We begin with the raw amino-acid sequence, 117 residues long: Large ribosomal subunit protein uL24 (117 aa).

Belongs to the universal ribosomal protein uL24 family. Part of the 50S ribosomal subunit.

In terms of biological role, one of two assembly initiator proteins, it binds directly to the 5'-end of the 23S rRNA, where it nucleates assembly of the 50S subunit. Functionally, one of the proteins that surrounds the polypeptide exit tunnel on the outside of the subunit. The chain is Large ribosomal subunit protein uL24 from Thermosynechococcus vestitus (strain NIES-2133 / IAM M-273 / BP-1).